The chain runs to 360 residues: D-xylose 1-dehydrogenase [NADP(+)] (360 aa).

Belongs to the Gfo/Idh/MocA family. In terms of assembly, homotretramer.

The catalysed reaction is D-xylofuranose + NADP(+) = D-xylono-1,4-lactone + NADPH + H(+). Its function is as follows. NADP-dependent D-xylose dehydrogenase involved in the degradation of D-xylose, a major component of hemicelluloses such as xylan. In addition to D-xylose, oxidizes D-ribose at similar kinetic constants, whereas D-glucose is oxidized with about 70-fold lower catalytic efficiency. This is D-xylose 1-dehydrogenase [NADP(+)] (gfo6) from Haloarcula marismortui (strain ATCC 43049 / DSM 3752 / JCM 8966 / VKM B-1809) (Halobacterium marismortui).